A 478-amino-acid polypeptide reads, in one-letter code: PRAME family member 11 (478 aa).

The LRR 1; degenerate repeat unit spans residues 99–126 (RWKLQVLDLQDVCENFWMVWSEAMAHGC). Residues 181-205 (HLCCKKLKILGMPFRNIRSILKMVN) form an LRR 2; degenerate repeat. One copy of the LRR 3; degenerate repeat lies at 206 to 232 (LDCIQEVEVNCKWILPILTQFTPYLGH). Residues 233–268 (LRNLQKLVLSHMDVSRYVSPEQKKEIVTQFTTQFLK) form an LRR 4; degenerate repeat. LRR repeat units follow at residues 269–294 (LRCL…LSCL), 295–326 (KTSL…SQLK), 327–347 (TLDL…QILL), 351–378 (AATL…ALSR), and 379–403 (CFEL…LLSH).

This sequence belongs to the PRAME family.

In Homo sapiens (Human), this protein is PRAME family member 11.